The primary structure comprises 237 residues: Uridylate kinase (237 aa).

Position 12–15 (12–15 (KLSG)) interacts with ATP. The interval 20-25 (GDEGFG) is involved in allosteric activation by GTP. A UMP-binding site is contributed by glycine 54. ATP is bound by residues glycine 55 and arginine 59. UMP-binding positions include aspartate 74 and 135–142 (TGSPFFTT). Threonine 162, tyrosine 168, and aspartate 171 together coordinate ATP.

Belongs to the UMP kinase family. Homohexamer.

The protein localises to the cytoplasm. It catalyses the reaction UMP + ATP = UDP + ADP. It functions in the pathway pyrimidine metabolism; CTP biosynthesis via de novo pathway; UDP from UMP (UMPK route): step 1/1. Its activity is regulated as follows. Allosterically activated by GTP. Inhibited by UTP. Catalyzes the reversible phosphorylation of UMP to UDP. This is Uridylate kinase from Haemophilus ducreyi (strain 35000HP / ATCC 700724).